Consider the following 952-residue polypeptide: Isoleucine--tRNA ligase (952 aa).

A 'HIGH' region motif is present at residues 60–70 (PYANGSLHIGH). Glu-562 contributes to the L-isoleucyl-5'-AMP binding site. A 'KMSKS' region motif is present at residues 603–607 (KMSKS). An ATP-binding site is contributed by Lys-606. Zn(2+) is bound by residues Cys-921, Cys-924, Cys-941, and Cys-944.

This sequence belongs to the class-I aminoacyl-tRNA synthetase family. IleS type 1 subfamily. In terms of assembly, monomer. Zn(2+) serves as cofactor.

It localises to the cytoplasm. It catalyses the reaction tRNA(Ile) + L-isoleucine + ATP = L-isoleucyl-tRNA(Ile) + AMP + diphosphate. Its function is as follows. Catalyzes the attachment of isoleucine to tRNA(Ile). As IleRS can inadvertently accommodate and process structurally similar amino acids such as valine, to avoid such errors it has two additional distinct tRNA(Ile)-dependent editing activities. One activity is designated as 'pretransfer' editing and involves the hydrolysis of activated Val-AMP. The other activity is designated 'posttransfer' editing and involves deacylation of mischarged Val-tRNA(Ile). This Microcystis aeruginosa (strain NIES-843 / IAM M-2473) protein is Isoleucine--tRNA ligase.